A 196-amino-acid polypeptide reads, in one-letter code: Cell division protein SepF (196 aa).

Residues valine 15–lysine 80 are disordered. Residues proline 57–lysine 72 show a composition bias toward low complexity.

Belongs to the SepF family. Homodimer. Interacts with FtsZ.

The protein resides in the cytoplasm. Cell division protein that is part of the divisome complex and is recruited early to the Z-ring. Probably stimulates Z-ring formation, perhaps through the cross-linking of FtsZ protofilaments. Its function overlaps with FtsA. This chain is Cell division protein SepF, found in Lactococcus lactis subsp. cremoris (strain MG1363).